The following is a 343-amino-acid chain: GTPase Obg (343 aa).

Residues 1 to 159 enclose the Obg domain; that stretch reads MKFLDQAKIY…RWVWLRLKLI (159 aa). The OBG-type G domain maps to 160–328; that stretch reads ADAGLVGLPN…LLRQVMTYVA (169 aa). Residues 166–173, 191–195, 213–216, 280–283, and 309–311 each bind GTP; these read GLPNAGKS, FTTLH, DIPG, NKCD, and SGV. Residues S173 and T193 each contribute to the Mg(2+) site.

It belongs to the TRAFAC class OBG-HflX-like GTPase superfamily. OBG GTPase family. As to quaternary structure, monomer. Requires Mg(2+) as cofactor.

It is found in the cytoplasm. Functionally, an essential GTPase which binds GTP, GDP and possibly (p)ppGpp with moderate affinity, with high nucleotide exchange rates and a fairly low GTP hydrolysis rate. Plays a role in control of the cell cycle, stress response, ribosome biogenesis and in those bacteria that undergo differentiation, in morphogenesis control. The polypeptide is GTPase Obg (Granulibacter bethesdensis (strain ATCC BAA-1260 / CGDNIH1)).